Reading from the N-terminus, the 269-residue chain is Phosphatidylglycerol--prolipoprotein diacylglyceryl transferase (269 aa).

7 helical membrane-spanning segments follow: residues 10–30 (IAVS…LIGF), 56–76 (AIFY…ILFY), 91–111 (IWEG…AMFF), 126–146 (FLAP…FIGG), 172–192 (PSQL…LWFF), 200–220 (YCVS…VEFV), and 237–257 (EGQL…MAGL). Position 139 (arginine 139) interacts with a 1,2-diacyl-sn-glycero-3-phospho-(1'-sn-glycerol).

Belongs to the Lgt family.

The protein resides in the cell inner membrane. The enzyme catalyses L-cysteinyl-[prolipoprotein] + a 1,2-diacyl-sn-glycero-3-phospho-(1'-sn-glycerol) = an S-1,2-diacyl-sn-glyceryl-L-cysteinyl-[prolipoprotein] + sn-glycerol 1-phosphate + H(+). It functions in the pathway protein modification; lipoprotein biosynthesis (diacylglyceryl transfer). Catalyzes the transfer of the diacylglyceryl group from phosphatidylglycerol to the sulfhydryl group of the N-terminal cysteine of a prolipoprotein, the first step in the formation of mature lipoproteins. This is Phosphatidylglycerol--prolipoprotein diacylglyceryl transferase from Marinomonas sp. (strain MWYL1).